Reading from the N-terminus, the 724-residue chain is Probable zinc transporter MSC2 (724 aa).

The Cytoplasmic segment spans residues 1–6 (MNLQEL). A helical membrane pass occupies residues 7-27 (LAKVPLLLSYPTIILSSNLIV). At 28–58 (PSHNDLISRAASTSAAEYADEKLIFFSTDHA) the chain is on the lumenal side. A helical transmembrane segment spans residues 59 to 79 (IRLIFLPTFVASSFNLFAHYF). At 80-90 (NFINYSSRRKY) the chain is on the cytoplasmic side. Residues 91 to 111 (YVLFTAIYFLSILTAIFHPIQ) traverse the membrane as a helical segment. Residues 112–134 (STCITLLIIKLLTTADESSPKIA) are Lumenal-facing. The chain crosses the membrane as a helical span at residues 135-155 (LNFKTILKTFVPFITLTLVIL). Over 156-174 (RWDPSFDASSGDVNKISTS) the chain is Cytoplasmic. A helical transmembrane segment spans residues 175–195 (LAAYALLILTLRYASPLILST). Over 196–219 (LSSSIGVVSKDTSVAQHSISRNKR) the chain is Lumenal. The chain crosses the membrane as a helical span at residues 220–240 (FPLILVLPIFSFVLLYLMTIV). Residues 241–244 (NKTY) are Cytoplasmic-facing. Residues 245–265 (NIQLLMVFVFFGCLSIFFLSL) form a helical membrane-spanning segment. At 266-298 (KDLFTEDGNQKKGGQEDEYCRMFDIKYMISYLW) the chain is on the lumenal side. The chain crosses the membrane as a helical span at residues 299–319 (LTRFTILLTGIMAIVVHFLSF). Topologically, residues 320–386 (NEITSSIKTD…KQMALNKDTR (67 aa)) are cytoplasmic. A helical membrane pass occupies residues 387 to 407 (SIFSFLLLNTAFMFVQLLYSF). Over 408 to 417 (RSKSLGLLSD) the chain is Lumenal. Residues 418-438 (SLHMALDCTSLLLGLIAGVLT) traverse the membrane as a helical segment. Residues 439 to 453 (KKPASDKFPFGLNYL) lie on the Cytoplasmic side of the membrane. The helical transmembrane segment at 454–474 (GTLAGFTNGVLLLGIVCGIFV) threads the bilayer. The Lumenal portion of the chain corresponds to 475–491 (EAIERIFNPIHLHATNE). Residues 492 to 512 (LLVVATLGLLVNLVGLFAFDH) form a helical membrane-spanning segment. The Cytoplasmic segment spans residues 513–528 (GAHDHGGTDNENMKGI). The chain crosses the membrane as a helical span at residues 529–549 (FLHILADTLGSVGVVISTLLI). At 550–563 (KLTHWPIFDPIASL) the chain is on the lumenal side. The helical transmembrane segment at 564–584 (LIGSLILLSALPLLKSTSANI) threads the bilayer. Topologically, residues 585 to 724 (LLRLDDKKHN…NSLPLQPIAN (140 aa)) are cytoplasmic. The segment at 614–653 (TPRFWPTESGSSGHSHAHTHSHAENHSHEHHHDQKNGSQE) is disordered. The span at 634–648 (SHAENHSHEHHHDQK) shows a compositional bias: basic and acidic residues.

It belongs to the cation diffusion facilitator (CDF) transporter (TC 2.A.4) family. SLC30A subfamily.

The protein resides in the endoplasmic reticulum membrane. Its subcellular location is the nucleus membrane. In terms of biological role, probably act as a zinc ion transporter moving zinc from the nucleus/endoplasmic reticulum to the cytoplasm. Involved in zinc ion homeostasis and cellular distribution. The polypeptide is Probable zinc transporter MSC2 (MSC2) (Saccharomyces cerevisiae (strain ATCC 204508 / S288c) (Baker's yeast)).